Reading from the N-terminus, the 129-residue chain is Ribosome-binding factor A (129 aa).

This sequence belongs to the RbfA family. As to quaternary structure, monomer. Binds 30S ribosomal subunits, but not 50S ribosomal subunits or 70S ribosomes.

Its subcellular location is the cytoplasm. One of several proteins that assist in the late maturation steps of the functional core of the 30S ribosomal subunit. Associates with free 30S ribosomal subunits (but not with 30S subunits that are part of 70S ribosomes or polysomes). Required for efficient processing of 16S rRNA. May interact with the 5'-terminal helix region of 16S rRNA. This Desulfosudis oleivorans (strain DSM 6200 / JCM 39069 / Hxd3) (Desulfococcus oleovorans) protein is Ribosome-binding factor A.